The primary structure comprises 414 residues: Probable tRNA pseudouridine synthase D (414 aa).

D90 functions as the Nucleophile in the catalytic mechanism. Residues G162–A382 enclose the TRUD domain.

This sequence belongs to the pseudouridine synthase TruD family.

The catalysed reaction is uridine(13) in tRNA = pseudouridine(13) in tRNA. In terms of biological role, could be responsible for synthesis of pseudouridine from uracil-13 in transfer RNAs. The sequence is that of Probable tRNA pseudouridine synthase D from Picrophilus torridus (strain ATCC 700027 / DSM 9790 / JCM 10055 / NBRC 100828 / KAW 2/3).